A 196-amino-acid chain; its full sequence is ATP-dependent Clp protease proteolytic subunit (196 aa).

Ser96 functions as the Nucleophile in the catalytic mechanism. Residue His121 is part of the active site.

This sequence belongs to the peptidase S14 family. In terms of assembly, fourteen ClpP subunits assemble into 2 heptameric rings which stack back to back to give a disk-like structure with a central cavity, resembling the structure of eukaryotic proteasomes.

It is found in the cytoplasm. The enzyme catalyses Hydrolysis of proteins to small peptides in the presence of ATP and magnesium. alpha-casein is the usual test substrate. In the absence of ATP, only oligopeptides shorter than five residues are hydrolyzed (such as succinyl-Leu-Tyr-|-NHMec, and Leu-Tyr-Leu-|-Tyr-Trp, in which cleavage of the -Tyr-|-Leu- and -Tyr-|-Trp bonds also occurs).. Functionally, cleaves peptides in various proteins in a process that requires ATP hydrolysis. Has a chymotrypsin-like activity. Plays a major role in the degradation of misfolded proteins. In Streptococcus agalactiae serotype III (strain NEM316), this protein is ATP-dependent Clp protease proteolytic subunit.